Reading from the N-terminus, the 834-residue chain is Dual specificity calcium/calmodulin-dependent 3',5'-cyclic nucleotide phosphodiesterase 1 (834 aa).

Residues 152 to 338 (HSHGRDDQQQ…DELSEVQPDA (187 aa)) form a disordered region. Low complexity predominate over residues 207-222 (THSGPTGPPSNTSSET). Over residues 236-252 (TVRESVMEESPSKDPGD) the composition is skewed to basic and acidic residues. The span at 260–301 (STSTLTSQTTTSSSATAEPSAKAAESQAGSAGSSGSCSNPAA) shows a compositional bias: low complexity. Positions 313 to 322 (WARSMSTNKT) are enriched in polar residues. A calmodulin-binding region spans residues 364 to 387 (EKPKFRSVAHAIRAGIFVDRMYRR). The PDEase domain occupies 392–786 (ALTAFPPDVV…RIWKEQAVKD (395 aa)). His469 (proton donor) is an active-site residue. The Zn(2+) site is built by His473, His509, Asp510, and Asp617. A Mg(2+)-binding site is contributed by Asp510. Disordered regions lie at residues 720–744 (IVIPNSGITPSMDKPRDHRTEAKTT) and 797–834 (EEAAAAAAAEAEESKPETETADGEQSEPAAEPADGAAA). Residues 732–741 (DKPRDHRTEA) show a composition bias toward basic and acidic residues. The segment covering 823 to 834 (EPAAEPADGAAA) has biased composition (low complexity).

It belongs to the cyclic nucleotide phosphodiesterase family. PDE1 subfamily. It depends on Zn(2+) as a cofactor. The cofactor is Mg(2+). As to expression, expressed in the head (at protein level). Expressed in Malpighian tubules. Expressed in neurons in the brain and ventral ganglia with male flies having higher levels of expression in the abdominal ganglia compared to female flies.

The enzyme catalyses a nucleoside 3',5'-cyclic phosphate + H2O = a nucleoside 5'-phosphate + H(+). It catalyses the reaction 3',5'-cyclic GMP + H2O = GMP + H(+). The catalysed reaction is 3',5'-cyclic AMP + H2O = AMP + H(+). Type I PDE are activated by the binding of calmodulin in the presence of Ca(2+). Inhibited by zaprinast and sildenafil. Functionally, cyclic nucleotide phosphodiesterase with a dual specificity for the second messengers cAMP and cGMP, which are key regulators of many important physiological processes. Required for male fertility and male mating behavior. The polypeptide is Dual specificity calcium/calmodulin-dependent 3',5'-cyclic nucleotide phosphodiesterase 1 (Drosophila melanogaster (Fruit fly)).